The chain runs to 213 residues: Imidazole glycerol phosphate synthase subunit HisH 1 (213 aa).

One can recognise a Glutamine amidotransferase type-1 domain in the interval 3–213 (SVSILDYGVG…LSIIQQFLQI (211 aa)). The active-site Nucleophile is the Cys81. Active-site residues include His195 and Glu197.

As to quaternary structure, heterodimer of HisH and HisF.

It localises to the cytoplasm. The catalysed reaction is 5-[(5-phospho-1-deoxy-D-ribulos-1-ylimino)methylamino]-1-(5-phospho-beta-D-ribosyl)imidazole-4-carboxamide + L-glutamine = D-erythro-1-(imidazol-4-yl)glycerol 3-phosphate + 5-amino-1-(5-phospho-beta-D-ribosyl)imidazole-4-carboxamide + L-glutamate + H(+). The enzyme catalyses L-glutamine + H2O = L-glutamate + NH4(+). It functions in the pathway amino-acid biosynthesis; L-histidine biosynthesis; L-histidine from 5-phospho-alpha-D-ribose 1-diphosphate: step 5/9. Its function is as follows. IGPS catalyzes the conversion of PRFAR and glutamine to IGP, AICAR and glutamate. The HisH subunit provides the glutamine amidotransferase activity that produces the ammonia necessary to HisF for the synthesis of IGP and AICAR. The sequence is that of Imidazole glycerol phosphate synthase subunit HisH 1 from Legionella pneumophila (strain Lens).